The primary structure comprises 230 residues: Probable carboxylesterase Culp2 (230 aa).

Positions 1–32 (MNDLLTRRLLTMGAAAAMLAAVLLLTPITVPA) form a signal peptide, tat-type signal. Cys-45 and Cys-112 form a disulfide bridge. The active-site Nucleophile is Ser-123. The cysteines at positions 185 and 192 are disulfide-linked. The active site involves Asp-189. The Proton donor/acceptor role is filled by His-207.

It belongs to the cutinase family. Predicted to be exported by the Tat system. The position of the signal peptide cleavage has not been experimentally proven.

The protein localises to the secreted. It localises to the cell surface. In Mycobacterium bovis (strain ATCC BAA-935 / AF2122/97), this protein is Probable carboxylesterase Culp2 (cut2).